Consider the following 262-residue polypeptide: Ribose-5-phosphate isomerase A (262 aa).

Substrate contacts are provided by residues 33 to 36 (TGST), 89 to 92 (DGAD), and 102 to 105 (KGGG). Glu111 acts as the Proton acceptor in catalysis. Lys129 contacts substrate.

The protein belongs to the ribose 5-phosphate isomerase family. Homodimer.

The enzyme catalyses aldehydo-D-ribose 5-phosphate = D-ribulose 5-phosphate. The protein operates within carbohydrate degradation; pentose phosphate pathway; D-ribose 5-phosphate from D-ribulose 5-phosphate (non-oxidative stage): step 1/1. Functionally, catalyzes the reversible conversion of ribose-5-phosphate to ribulose 5-phosphate. The chain is Ribose-5-phosphate isomerase A from Ruegeria pomeroyi (strain ATCC 700808 / DSM 15171 / DSS-3) (Silicibacter pomeroyi).